A 63-amino-acid polypeptide reads, in one-letter code: Large ribosomal subunit protein uL30 (63 aa).

Belongs to the universal ribosomal protein uL30 family. In terms of assembly, part of the 50S ribosomal subunit.

This chain is Large ribosomal subunit protein uL30, found in Rickettsia africae (strain ESF-5).